A 377-amino-acid polypeptide reads, in one-letter code: uncharacterized protein (377 aa).

2 helical membrane-spanning segments follow: residues 71 to 91 and 140 to 160; these read IIAT…LVGS and AEAA…PTLF.

The protein resides in the membrane. This is an uncharacterized protein from Coxiella burnetii (strain RSA 493 / Nine Mile phase I).